The primary structure comprises 239 residues: Purine nucleoside phosphorylase DeoD-type (239 aa).

Histidine 5 contacts a purine D-ribonucleoside. Phosphate contacts are provided by residues glycine 21, arginine 25, arginine 44, and 89 to 92 (RVGS). Residues 180–182 (EME) and 204–205 (SD) each bind a purine D-ribonucleoside. The active-site Proton donor is the aspartate 205.

Belongs to the PNP/UDP phosphorylase family. Homohexamer; trimer of homodimers.

The catalysed reaction is a purine D-ribonucleoside + phosphate = a purine nucleobase + alpha-D-ribose 1-phosphate. It carries out the reaction a purine 2'-deoxy-D-ribonucleoside + phosphate = a purine nucleobase + 2-deoxy-alpha-D-ribose 1-phosphate. In terms of biological role, catalyzes the reversible phosphorolytic breakdown of the N-glycosidic bond in the beta-(deoxy)ribonucleoside molecules, with the formation of the corresponding free purine bases and pentose-1-phosphate. The sequence is that of Purine nucleoside phosphorylase DeoD-type from Klebsiella pneumoniae.